Consider the following 663-residue polypeptide: Methionine--tRNA ligase (663 aa).

A 'HIGH' region motif is present at residues 10-20; it reads AYTNGPLHLGH. Zn(2+)-binding residues include cysteine 142, cysteine 145, cysteine 154, and cysteine 157. The short motif at 323–327 is the 'KMSKS' region element; the sequence is KMSTS. An ATP-binding site is contributed by threonine 326. In terms of domain architecture, tRNA-binding spans 563–663; sequence YFTKVDLRVG…REISLGSKIH (101 aa).

The protein belongs to the class-I aminoacyl-tRNA synthetase family. MetG type 1 subfamily. Homodimer. Requires Zn(2+) as cofactor.

It is found in the cytoplasm. It catalyses the reaction tRNA(Met) + L-methionine + ATP = L-methionyl-tRNA(Met) + AMP + diphosphate. In terms of biological role, is required not only for elongation of protein synthesis but also for the initiation of all mRNA translation through initiator tRNA(fMet) aminoacylation. This is Methionine--tRNA ligase from Methanococcus vannielii (strain ATCC 35089 / DSM 1224 / JCM 13029 / OCM 148 / SB).